The chain runs to 419 residues: Serine hydroxymethyltransferase 1 (419 aa).

(6S)-5,6,7,8-tetrahydrofolate-binding positions include Leu121 and 125–127 (GHL). Lys230 is subject to N6-(pyridoxal phosphate)lysine. 356-358 (SPF) contacts (6S)-5,6,7,8-tetrahydrofolate.

It belongs to the SHMT family. As to quaternary structure, homodimer. Pyridoxal 5'-phosphate is required as a cofactor.

The protein localises to the cytoplasm. It carries out the reaction (6R)-5,10-methylene-5,6,7,8-tetrahydrofolate + glycine + H2O = (6S)-5,6,7,8-tetrahydrofolate + L-serine. It participates in one-carbon metabolism; tetrahydrofolate interconversion. It functions in the pathway amino-acid biosynthesis; glycine biosynthesis; glycine from L-serine: step 1/1. Its function is as follows. Catalyzes the reversible interconversion of serine and glycine with tetrahydrofolate (THF) serving as the one-carbon carrier. This reaction serves as the major source of one-carbon groups required for the biosynthesis of purines, thymidylate, methionine, and other important biomolecules. Also exhibits THF-independent aldolase activity toward beta-hydroxyamino acids, producing glycine and aldehydes, via a retro-aldol mechanism. The sequence is that of Serine hydroxymethyltransferase 1 from Colwellia psychrerythraea (strain 34H / ATCC BAA-681) (Vibrio psychroerythus).